A 349-amino-acid polypeptide reads, in one-letter code: Isopentenyl-diphosphate delta-isomerase (349 aa).

6–7 (RK) lines the substrate pocket. FMN is bound by residues 62–64 (AMT), Ser-93, and Asn-122. Gln-152 contacts substrate. Glu-153 lines the Mg(2+) pocket. Residues Lys-184, Thr-214, 258–259 (GG), and 280–281 (AG) each bind FMN.

It belongs to the IPP isomerase type 2 family. In terms of assembly, homooctamer. Dimer of tetramers. The cofactor is FMN. NADPH is required as a cofactor. Mg(2+) serves as cofactor.

Its subcellular location is the cytoplasm. The enzyme catalyses isopentenyl diphosphate = dimethylallyl diphosphate. Functionally, involved in the biosynthesis of isoprenoids. Catalyzes the 1,3-allylic rearrangement of the homoallylic substrate isopentenyl (IPP) to its allylic isomer, dimethylallyl diphosphate (DMAPP). The protein is Isopentenyl-diphosphate delta-isomerase of Bacillus cereus (strain ATCC 14579 / DSM 31 / CCUG 7414 / JCM 2152 / NBRC 15305 / NCIMB 9373 / NCTC 2599 / NRRL B-3711).